A 411-amino-acid polypeptide reads, in one-letter code: Arginine deiminase (411 aa).

The active-site Amidino-cysteine intermediate is Cys401.

This sequence belongs to the arginine deiminase family.

The protein localises to the cytoplasm. It carries out the reaction L-arginine + H2O = L-citrulline + NH4(+). It functions in the pathway amino-acid degradation; L-arginine degradation via ADI pathway; carbamoyl phosphate from L-arginine: step 1/2. The chain is Arginine deiminase from Streptococcus pyogenes serotype M2 (strain MGAS10270).